A 147-amino-acid chain; its full sequence is Protein phosphatase 1 regulatory subunit 14B (147 aa).

A disordered region spans residues 1-55 (MADSGTAGGAALAAPAPGPGSGGPGPRVYFQSPPGAAGEGPGGADDEGPVRRQGK). Alanine 2 bears the N-acetylalanine mark. Phosphoserine is present on serine 21. Position 29 is a phosphotyrosine (tyrosine 29). Serine 32 is subject to Phosphoserine. Phosphothreonine is present on threonine 57. The stretch at 61–103 (DRKELRKRLNLEEWILEQLTRLYDCQEEEIPELEIDVDELLDM) forms a coiled coil.

The protein belongs to the PP1 inhibitor family. Post-translationally, phosphorylated primarily on Thr-57 by PKC (in vitro). An unknown Ser is also phosphorylated by PKC (in vitro). As to expression, ubiquitous. Expressed at low levels.

The protein resides in the cytoplasm. Functionally, inhibitor of PPP1CA. Has over 50-fold higher inhibitory activity when phosphorylated. The polypeptide is Protein phosphatase 1 regulatory subunit 14B (PPP1R14B) (Homo sapiens (Human)).